We begin with the raw amino-acid sequence, 281 residues long: LIM domain-containing protein G (281 aa).

LIM zinc-binding domains follow at residues 40 to 101 (LNCS…IKFN), 141 to 205 (DICT…SKQV), and 206 to 262 (NCFA…FTQP).

In Dictyostelium discoideum (Social amoeba), this protein is LIM domain-containing protein G (limG).